Here is a 796-residue protein sequence, read N- to C-terminus: Volume-regulated anion channel subunit LRRC8E (796 aa).

Residues 1-22 are Cytoplasmic-facing; sequence MIPVAEFKQFTEQQPAFKVLKP. A helical transmembrane segment spans residues 23-43; the sequence is WWDVLAEYLTVAMLMIGVFGC. The Extracellular portion of the chain corresponds to 44 to 116; the sequence is TLQVTQDKII…YETALHWYAK (73 aa). A disulfide bridge links Cys54 with Cys301. Asn63 is a glycosylation site (N-linked (GlcNAc...) asparagine). The chain crosses the membrane as a helical span at residues 117–137; it reads YFPYLVVIHTLIFMVCTSFWF. The Cytoplasmic segment spans residues 138 to 265; sequence KFPGTSSKIE…IRQTVLKVCK (128 aa). The helical transmembrane segment at 266–286 threads the bilayer; the sequence is FLAILVYNLVYVEKISFLVAC. The Extracellular segment spans residues 287–313; the sequence is RVETSEVTGYASFCCNHTKAHLFSKLA. Asn302 is a glycosylation site (N-linked (GlcNAc...) asparagine). Residues 314 to 334 form a helical membrane-spanning segment; it reads FCYISFVCIYGLTCIYTLYWL. Over 335-796 the chain is Cytoplasmic; the sequence is FHRPLKEYSF…AEVRDKMEEE (462 aa). 11 LRR repeats span residues 508–529, 536–557, 559–579, 583–604, 606–627, 631–652, 654–675, 677–698, 700–721, 723–744, and 746–767; these read GLEE…ATLE, QLKV…TDVA, HLQR…NSLK, ALRE…VFSL, ALQE…LSFQ, KLVT…VRKL, SLEQ…LGLC, GLRL…VGLL, NLQH…LFFC, KLRT…VGAL, and ALSR…LGNC.

The protein belongs to the LRRC8 family. In terms of assembly, heterohexamer; oligomerizes with other LRRC8 proteins (LRRC8A, LRRC8C, LRRC8D and/or LRRC8B) to form a heterohexamer. In vivo, the subunit composition may depend primarily on expression levels, and heterooligomeric channels containing various proportions of the different LRRC8 proteins may coexist.

Its subcellular location is the cell membrane. It localises to the endoplasmic reticulum membrane. The protein resides in the lysosome membrane. The catalysed reaction is chloride(in) = chloride(out). It carries out the reaction iodide(out) = iodide(in). The enzyme catalyses taurine(out) = taurine(in). It catalyses the reaction 2',3'-cGAMP(out) = 2',3'-cGAMP(in). Non-essential component of the volume-regulated anion channel (VRAC, also named VSOAC channel), an anion channel required to maintain a constant cell volume in response to extracellular or intracellular osmotic changes. The VRAC channel conducts iodide better than chloride and can also conduct organic osmolytes like taurine. Mediates efflux of amino acids, such as aspartate, in response to osmotic stress. The VRAC channel also mediates transport of immunoreactive cyclic dinucleotide GMP-AMP (2'-3'-cGAMP), an immune messenger produced in response to DNA virus in the cytosol. Channel activity requires LRRC8A plus at least one other family member (LRRC8B, LRRC8C, LRRC8D or LRRC8E); channel characteristics depend on the precise subunit composition. Also plays a role in lysosome homeostasis by forming functional lysosomal VRAC channels in response to low cytoplasmic ionic strength condition: lysosomal VRAC channels are necessary for the formation of large lysosome-derived vacuoles, which store and then expel excess water to maintain cytosolic water homeostasis. This is Volume-regulated anion channel subunit LRRC8E from Homo sapiens (Human).